Reading from the N-terminus, the 484-residue chain is 1,4-beta-D-glucan cellobiohydrolase CEL6A (484 aa).

An N-terminal signal peptide occupies residues 1-17 (MAKRLLLTAALAATTLA). Residues 26-62 (NCGSVWSQCGGQGWTGATCCASGSTCVAQNQWYSQCL) form the CBM1 domain. 2 disulfides stabilise this stretch: Cys34/Cys51 and Cys45/Cys61. Residues 68-98 (TTTAQAPSSTRTTTSSSSRPTSSSISTSAVN) are disordered. Residues Trp171 and Asp173 each contribute to the substrate site. Asn175 carries N-linked (GlcNAc...) asparagine glycosylation. The substrate binding loop 1 stretch occupies residues 208–230 (YDLPDRDCAAAASNGEWAIADGG). Asp260 acts as the Proton donor in catalysis. The substrate site is built by His305, Trp308, Asn344, Trp405, Lys433, and Glu437. The interval 431-469 (WIKPGGECDGTSDTTAARYDHHCGFADALKPAPEAGQWF) is substrate binding loop 2. The active-site Proton acceptor is Asp439.

The protein belongs to the glycosyl hydrolase 6 (cellulase B) family. In terms of assembly, monomer. In terms of processing, both N- and O-glycosylated.

It is found in the secreted. The enzyme catalyses Hydrolysis of (1-&gt;4)-beta-D-glucosidic linkages in cellulose and cellotetraose, releasing cellobiose from the non-reducing ends of the chains.. Functionally, exoglucanase that plays an important function in biomass degradation by catalyzing the hydrolysis of the non-reducing end beta-1,4-glucosidic linkages in cellulose and cellotetraose to release cellobiose. Hydrolyzes crystalline and amorphous cellulose but is inactive on hydroxyethyl cellulose, mannan, galactomannan, xyloglucan, arabinoxylan, arabinan, xylan, and pectin. This Podospora anserina (strain S / ATCC MYA-4624 / DSM 980 / FGSC 10383) (Pleurage anserina) protein is 1,4-beta-D-glucan cellobiohydrolase CEL6A.